The sequence spans 122 residues: Large ribosomal subunit protein bL12 (122 aa).

It belongs to the bacterial ribosomal protein bL12 family. As to quaternary structure, homodimer. Part of the ribosomal stalk of the 50S ribosomal subunit. Forms a multimeric L10(L12)X complex, where L10 forms an elongated spine to which 2 to 4 L12 dimers bind in a sequential fashion. Binds GTP-bound translation factors.

Functionally, forms part of the ribosomal stalk which helps the ribosome interact with GTP-bound translation factors. Is thus essential for accurate translation. This is Large ribosomal subunit protein bL12 from Shewanella putrefaciens (strain CN-32 / ATCC BAA-453).